The chain runs to 391 residues: Succinate--CoA ligase [ADP-forming] subunit beta (391 aa).

The ATP-grasp domain maps to 9–237 (RDLFEKHGVP…RATTDPLELR (229 aa)). Residues Lys-46, 53 to 55 (GRG), Ala-95, and Glu-100 contribute to the ATP site. Asn-192 and Asp-206 together coordinate Mg(2+). Residues Asn-257 and 320-322 (GIT) each bind substrate.

It belongs to the succinate/malate CoA ligase beta subunit family. In terms of assembly, heterotetramer of two alpha and two beta subunits. The cofactor is Mg(2+).

The catalysed reaction is succinate + ATP + CoA = succinyl-CoA + ADP + phosphate. It catalyses the reaction GTP + succinate + CoA = succinyl-CoA + GDP + phosphate. It participates in carbohydrate metabolism; tricarboxylic acid cycle; succinate from succinyl-CoA (ligase route): step 1/1. Succinyl-CoA synthetase functions in the citric acid cycle (TCA), coupling the hydrolysis of succinyl-CoA to the synthesis of either ATP or GTP and thus represents the only step of substrate-level phosphorylation in the TCA. The beta subunit provides nucleotide specificity of the enzyme and binds the substrate succinate, while the binding sites for coenzyme A and phosphate are found in the alpha subunit. This is Succinate--CoA ligase [ADP-forming] subunit beta from Cutibacterium acnes (strain DSM 16379 / KPA171202) (Propionibacterium acnes).